A 434-amino-acid chain; its full sequence is Septin-6 (434 aa).

Alanine 2 is modified (N-acetylalanine). Serine 27 is modified (phosphoserine). The Septin-type G domain occupies 39–305 (QGFCFNILCV…ELYRRCKLEE (267 aa)). The interval 49–56 (GETGLGKS) is G1 motif. GTP-binding positions include 49–56 (GETGLGKS), glycine 104, 185–193 (KSDAISKSE), glycine 239, and arginine 254. Positions 101–104 (STVG) are G3 motif. The interval 184-187 (AKSD) is G4 motif. The stretch at 321-407 (QETYEAKRNE…QRKAAAELLQ (87 aa)) forms a coiled coil. Residue lysine 367 is modified to N6-acetyllysine. The tract at residues 403–434 (AELLQSQGSQAGGSQTLKRDKEKKNNPWLCIE) is disordered. The segment covering 407–417 (QSQGSQAGGSQ) has biased composition (low complexity). Serine 416 is modified (phosphoserine). Threonine 418 carries the phosphothreonine modification.

Belongs to the TRAFAC class TrmE-Era-EngA-EngB-Septin-like GTPase superfamily. Septin GTPase family. Septins polymerize into heterooligomeric protein complexes that form filaments, and associate with cellular membranes, actin filaments and microtubules. GTPase activity is required for filament formation. Filaments are assembled from asymmetrical heterotrimers, composed of SEPTIN2, SEPTIN6 and SEPTIN7 that associate head-to-head to form a hexameric unit. Within the trimer, directly interacts with SEPTIN2 and SEPTIN7. Also interacts with SEPTIN9 and SEPTIN12. Interaction with SEPTIN12 alters filament structure. Component of a septin core octameric complex consisting of SEPTIN12, SEPTIN7, SEPTIN6 and SEPTIN2 or SEPTIN4 in the order 12-7-6-2-2-6-7-12 or 12-7-6-4-4-6-7-12 and located in the sperm annulus. Interacts with SOCS7. Interacts with HNRNPA1. In terms of tissue distribution, expressed in the cerebral cortex (at protein level). Associated with synaptic vesicles in various brain regions, including glomeruli of the olfactory bulb (at protein level).

The protein resides in the cytoplasm. The protein localises to the cytoskeleton. It is found in the spindle. It localises to the chromosome. Its subcellular location is the centromere. The protein resides in the kinetochore. The protein localises to the cleavage furrow. It is found in the midbody. It localises to the cell projection. Its subcellular location is the cilium. The protein resides in the flagellum. Its function is as follows. Filament-forming cytoskeletal GTPase. Required for normal organization of the actin cytoskeleton. Involved in cytokinesis. Forms a filamentous structure with SEPTIN12, SEPTIN6, SEPTIN2 and probably SEPTIN4 at the sperm annulus which is required for the structural integrity and motility of the sperm tail during postmeiotic differentiation. This is Septin-6 from Mus musculus (Mouse).